A 78-amino-acid polypeptide reads, in one-letter code: Translational regulator CsrA (78 aa).

Belongs to the CsrA/RsmA family. Homodimer; the beta-strands of each monomer intercalate to form a hydrophobic core, while the alpha-helices form wings that extend away from the core.

The protein localises to the cytoplasm. Its function is as follows. A translational regulator that binds mRNA to regulate translation initiation and/or mRNA stability. Usually binds in the 5'-UTR at or near the Shine-Dalgarno sequence preventing ribosome-binding, thus repressing translation. Its main target seems to be the major flagellin gene, while its function is anatagonized by FliW. The sequence is that of Translational regulator CsrA from Desulfotalea psychrophila (strain LSv54 / DSM 12343).